We begin with the raw amino-acid sequence, 194 residues long: Translationally-controlled tumor protein homolog 2 (194 aa).

The TCTP domain occupies 1–194; sequence MKLYKDLIGN…IKYGLLQVDV (194 aa).

This sequence belongs to the TCTP family.

It is found in the cytoplasm. In terms of biological role, involved in calcium binding and microtubule stabilization. This Dictyostelium discoideum (Social amoeba) protein is Translationally-controlled tumor protein homolog 2.